Reading from the N-terminus, the 465-residue chain is Uronate isomerase (465 aa).

This sequence belongs to the metallo-dependent hydrolases superfamily. Uronate isomerase family.

The enzyme catalyses D-glucuronate = D-fructuronate. It carries out the reaction aldehydo-D-galacturonate = keto-D-tagaturonate. It participates in carbohydrate metabolism; pentose and glucuronate interconversion. The sequence is that of Uronate isomerase from Streptococcus equi subsp. zooepidemicus (strain MGCS10565).